Here is a 197-residue protein sequence, read N- to C-terminus: Phosphoheptose isomerase (197 aa).

An SIS domain is found at 34-196 (MVNCLLGGNK…DRTLFPQDEQ (163 aa)). 49–51 (NGG) provides a ligand contact to substrate. Residues His-58 and Glu-62 each contribute to the Zn(2+) site. Substrate-binding positions include Glu-62, 91–92 (ND), 117–119 (STS), Ser-122, and Gln-172. Positions 172 and 180 each coordinate Zn(2+).

This sequence belongs to the SIS family. GmhA subfamily. Homotetramer. Zn(2+) serves as cofactor.

It is found in the cytoplasm. The enzyme catalyses 2 D-sedoheptulose 7-phosphate = D-glycero-alpha-D-manno-heptose 7-phosphate + D-glycero-beta-D-manno-heptose 7-phosphate. Its pathway is carbohydrate biosynthesis; D-glycero-D-manno-heptose 7-phosphate biosynthesis; D-glycero-alpha-D-manno-heptose 7-phosphate and D-glycero-beta-D-manno-heptose 7-phosphate from sedoheptulose 7-phosphate: step 1/1. In terms of biological role, catalyzes the isomerization of sedoheptulose 7-phosphate in D-glycero-D-manno-heptose 7-phosphate. The sequence is that of Phosphoheptose isomerase from Shewanella pealeana (strain ATCC 700345 / ANG-SQ1).